We begin with the raw amino-acid sequence, 145 residues long: 3-dehydroquinate dehydratase (145 aa).

Residue Tyr-23 is the Proton acceptor of the active site. Substrate-binding residues include Asn-74, His-80, and Asp-87. His-100 acts as the Proton donor in catalysis. Substrate is bound by residues 101 to 102 (IS) and Arg-111.

The protein belongs to the type-II 3-dehydroquinase family. As to quaternary structure, homododecamer.

The catalysed reaction is 3-dehydroquinate = 3-dehydroshikimate + H2O. It participates in metabolic intermediate biosynthesis; chorismate biosynthesis; chorismate from D-erythrose 4-phosphate and phosphoenolpyruvate: step 3/7. In terms of biological role, catalyzes a trans-dehydration via an enolate intermediate. The chain is 3-dehydroquinate dehydratase from Dictyoglomus turgidum (strain DSM 6724 / Z-1310).